Reading from the N-terminus, the 285-residue chain is Golgi phosphoprotein 3-like (285 aa).

Positions 1-39 (MTTLTHRARRTEVGKNSEKKVESEENVNQDRNQDNEDIG) are disordered. Residues 10–23 (RTEVGKNSEKKVES) are compositionally biased toward basic and acidic residues. The a 1,2-diacyl-sn-glycero-3-phospho-(1D-myo-inositol 4-phosphate) site is built by Trp-67 and Arg-76. Ser-112 is subject to Phosphoserine. Residues Arg-157 and Arg-160 each coordinate a 1,2-diacyl-sn-glycero-3-phospho-(1D-myo-inositol 4-phosphate). The interval 176 to 187 (EKQNFLLFDMTT) is beta-hairpin required for oligomerization.

It belongs to the GOLPH3/VPS74 family. As to quaternary structure, homooligomer. Does not interact MYO18; differs from GOLPH3 by its inability to interact with MYO18. May interact with ARF1.

The protein localises to the golgi apparatus. It is found in the golgi stack membrane. The protein resides in the trans-Golgi network membrane. Phosphatidylinositol-4-phosphate-binding protein that may antagonize the action of GOLPH3 which is required for the process of vesicle budding at the Golgi and anterograde transport to the plasma membrane. The polypeptide is Golgi phosphoprotein 3-like (GOLPH3L) (Bos taurus (Bovine)).